The following is an 89-amino-acid chain: DNA-binding protein HU (89 aa).

The protein belongs to the bacterial histone-like protein family. Homodimer. The dimer interacts with the DNA mimic protein DMP12. It also interacts with the monomeric form of the DNA mimic protein DMP19 with 1:1 stoichiometry.

With respect to regulation, activity is regulated by the DNA mimic protein DMP12. Activity is inhibited in the presence of the DNA mimic protein DMP19, which interacts with HU and prevents the binding of HU to DNA. In terms of biological role, histone-like DNA-binding protein which is capable of wrapping DNA to stabilize it, and thus to prevent its denaturation under extreme environmental conditions. This Neisseria meningitidis serogroup B (strain ATCC BAA-335 / MC58) protein is DNA-binding protein HU.